A 237-amino-acid chain; its full sequence is UPF0688 protein C1orf174 homolog (237 aa).

Residues 1–187 (MRSRKLAGGV…LLDDDSNQPM (187 aa)) are disordered. A compositionally biased stretch (low complexity) spans 11-28 (RSSARLRARSCSAASASA). The segment covering 29 to 47 (QDTHVTTSAQTACQTPSSH) has biased composition (polar residues). Residues 48-76 (KATDRRTSKKFKYDKGHIVKSELQKHRSD) show a composition bias toward basic and acidic residues. Phosphoserine is present on S183.

The protein belongs to the UPF0688 family.

Its subcellular location is the nucleus. This chain is UPF0688 protein C1orf174 homolog, found in Bos taurus (Bovine).